Consider the following 4467-residue polypeptide: Protocadherin-like protein (4467 aa).

Positions 1 to 22 (MRGINAIVGFLLCFCLLHRINT) are cleaved as a signal peptide. 28 Cadherin domains span residues 23–128 (AVQF…SPTF), 129–238 (PQHL…SPVF), 239–350 (EKKS…VPVF), 351–455 (QEES…TPVF), 459–566 (NPQQ…NPDF), 567–664 (SKVV…PPTF), 665–764 (KNAP…PPTF), 765–884 (SRSS…SPEF), 885–994 (SQTS…PPLF), 1092–1197 (EAQP…QPRF), 1290–1395 (SRTV…SPKF), 1396–1499 (SADS…PPKF), 1495–1597 (GPPK…EPQF), 1601–1701 (SNGF…QPVR), 1793–1891 (TMID…KPQF), 1892–1992 (SESA…YPKF), 1993–2100 (EPNL…KPQF), 2101–2202 (LESD…RPVF), 2203–2312 (TDCP…FPFF), 2313–2423 (LTRT…PPAF), 2425–2529 (PSAV…TPTF), 2530–2639 (KLEE…PPIF), 2640–2746 (PKPS…IPKF), 2747–2849 (DNLI…SPYF), 2850–2954 (PNPP…APVF), 2955–3062 (NPRE…PPVF), 3063–3170 (VPAE…GPWF), and 3173–3288 (RYYE…EPFD). Residues 23 to 4258 (AVQFKQEILE…RPSSRWANPA (4236 aa)) lie on the Extracellular side of the membrane. The EGF-like 1 domain maps to 3551-3589 (PDINCTTGTPCLHGGTCHNAVPKGIICECGRDYLGPECQ). 7 disulfides stabilise this stretch: cysteine 3555–cysteine 3567, cysteine 3561–cysteine 3577, cysteine 3579–cysteine 3588, cysteine 3762–cysteine 3788, cysteine 3794–cysteine 3803, cysteine 3797–cysteine 3812, and cysteine 3814–cysteine 3823. Residues 3590–3788 (STTRTFRGNS…LKEVNTELGC (199 aa)) form the Laminin G-like 1 domain. An EGF-like 2 domain is found at 3790 to 3824 (LNNQCPNCNGRGYCEPFWNYAICVCDLGFGGANCD). The Laminin G-like 2 domain maps to 3842–4096 (VKQVKRKRRE…KVIISSSGGS (255 aa)). The disordered stretch occupies residues 4089 to 4118 (IISSSGGSVSGGSGGASGGSGGASGSGGSV). Over residues 4096 to 4118 (SVSGGSGGASGGSGGASGSGGSV) the composition is skewed to gly residues. In terms of domain architecture, EGF-like 3 spans 4206–4238 (PCGSNFCRHGGTCVSADPPYCLCPVGWSGPVCE). Cystine bridges form between cysteine 4207-cysteine 4218, cysteine 4212-cysteine 4226, and cysteine 4228-cysteine 4237. A helical transmembrane segment spans residues 4259–4279 (VIACILVILLAILVIIGAVLL). The Cytoplasmic portion of the chain corresponds to 4280–4467 (KRRPQPAVVA…NLNRIFNEDE (188 aa)). Residues 4424–4445 (DVDDLSELGDSDEEPDEEEEQE) form a disordered region.

In terms of tissue distribution, component of the acid-insoluble organic matrix of the aragonitic skeleton (at protein level).

Its subcellular location is the membrane. This chain is Protocadherin-like protein, found in Acropora millepora (Staghorn coral).